A 346-amino-acid chain; its full sequence is G-protein coupled receptor homolog U12 (346 aa).

The Extracellular segment spans residues 1 to 31 (MICYSFAKNVTFAFLIILQNFFSQHDEEYKY). Residues 32 to 56 (NYTCITPTVRKAQRLESVINGIMLT) form a helical membrane-spanning segment. Over 57-83 (LILPVSTVVICTLLIYYKWTKQTITSP) the chain is Cytoplasmic. Residues 84–108 (YLITLFISDSLHSLTVLLLTLNREA) traverse the membrane as a helical segment. Over 109 to 115 (LTNLNQA) the chain is Extracellular. The chain crosses the membrane as a helical span at residues 116 to 142 (LCQCVLFVYSASCTYSLCMLAVISTIR). Over 143 to 159 (YRTLQRRTLNDKNNNHI) the chain is Cytoplasmic. A helical transmembrane segment spans residues 160-181 (KRNVGILFLSSAMCAIPAVLYV). Residues 182–208 (QVEKKKGNYGKCNIHISTQKAYDLFIG) lie on the Extracellular side of the membrane. Residues 209-229 (IKIVYCFLWGIFPTVIFSYFY) form a helical membrane-spanning segment. The Cytoplasmic segment spans residues 230–245 (VIFGKTLRALTQSKHN). A helical transmembrane segment spans residues 246–272 (KTLSFISLLILSFLCIQIPNLLVMSVE). Topologically, residues 273–286 (IFFLYIANTSCLGT) are extracellular. A helical transmembrane segment spans residues 287–310 (IQREIVQIISRLMPEIHCLSNPLV). The Cytoplasmic segment spans residues 311-346 (YAFTRTDFRLRFYDFIKCNLCNSSLKRKRNPLTIKN).

It belongs to the G-protein coupled receptor 1 family.

The protein resides in the host cell membrane. This Homo sapiens (Human) protein is G-protein coupled receptor homolog U12 (U12).